The chain runs to 138 residues: Cell division protein SepF (138 aa).

Belongs to the SepF family. In terms of assembly, homodimer. Interacts with FtsZ.

Its subcellular location is the cytoplasm. In terms of biological role, cell division protein that is part of the divisome complex and is recruited early to the Z-ring. Probably stimulates Z-ring formation, perhaps through the cross-linking of FtsZ protofilaments. Its function overlaps with FtsA. The sequence is that of Cell division protein SepF from Limosilactobacillus reuteri (strain DSM 20016) (Lactobacillus reuteri).